Here is a 92-residue protein sequence, read N- to C-terminus: RNA-binding protein Hfq (92 aa).

The Sm domain maps to 10–71 (DLFLNQLRKE…ISSIMPSKPI (62 aa)). The interval 73–92 (YMAQAQNNQQASQQSNNNQG) is disordered. The segment covering 75–92 (AQAQNNQQASQQSNNNQG) has biased composition (low complexity).

The protein belongs to the Hfq family. As to quaternary structure, homohexamer.

Functionally, RNA chaperone that binds small regulatory RNA (sRNAs) and mRNAs to facilitate mRNA translational regulation in response to envelope stress, environmental stress and changes in metabolite concentrations. Also binds with high specificity to tRNAs. This chain is RNA-binding protein Hfq, found in Caldicellulosiruptor bescii (strain ATCC BAA-1888 / DSM 6725 / KCTC 15123 / Z-1320) (Anaerocellum thermophilum).